A 242-amino-acid polypeptide reads, in one-letter code: Caffeoyl-CoA O-methyltransferase 4 (242 aa).

Position 16 (Lys16) interacts with substrate. S-adenosyl-L-methionine-binding positions include Thr58, Glu80, 82–83, Ser88, Asp106, and Ala135; that span reads GV. Substrate is bound at residue Asp158. Asp158 serves as a coordination point for a divalent metal cation. Asp160 contributes to the S-adenosyl-L-methionine binding site. The a divalent metal cation site is built by Asp184 and Asn185. Asn189 is a binding site for substrate.

This sequence belongs to the class I-like SAM-binding methyltransferase superfamily. Cation-dependent O-methyltransferase family. CCoAMT subfamily. The cofactor is Mg(2+). In terms of tissue distribution, mostly expressed in the bottom and middle parts of the stems.

It carries out the reaction (E)-caffeoyl-CoA + S-adenosyl-L-methionine = (E)-feruloyl-CoA + S-adenosyl-L-homocysteine + H(+). Its pathway is aromatic compound metabolism; phenylpropanoid biosynthesis. Functionally, methylates caffeoyl-CoA to feruloyl-CoA and 5-hydroxyferuloyl-CoA to sinapoyl-CoA. Plays a role in the synthesis of feruloylated polysaccharides. Involved in the reinforcement of the plant cell wall. Also involved in the responding to wounding or pathogen challenge by the increased formation of cell wall-bound ferulic acid polymers. This Nicotiana tabacum (Common tobacco) protein is Caffeoyl-CoA O-methyltransferase 4 (CCOAOMT4).